Consider the following 129-residue polypeptide: Beta-galactoside-binding lectin (129 aa).

An N-acetylserine modification is found at serine 1. In terms of domain architecture, Galectin spans 4–129 (GVVDERMSFK…EARIYSIEIK (126 aa)). 69-75 (WGTEQRE) contacts a beta-D-galactoside.

Its function is as follows. This protein binds beta-galactoside. Its physiological function is not yet known. The polypeptide is Beta-galactoside-binding lectin (Electrophorus electricus (Electric eel)).